Here is a 238-residue protein sequence, read N- to C-terminus: tRNA1(Val) (adenine(37)-N6)-methyltransferase (238 aa).

The protein belongs to the methyltransferase superfamily. tRNA (adenine-N(6)-)-methyltransferase family.

The protein resides in the cytoplasm. It catalyses the reaction adenosine(37) in tRNA1(Val) + S-adenosyl-L-methionine = N(6)-methyladenosine(37) in tRNA1(Val) + S-adenosyl-L-homocysteine + H(+). Its function is as follows. Specifically methylates the adenine in position 37 of tRNA(1)(Val) (anticodon cmo5UAC). The protein is tRNA1(Val) (adenine(37)-N6)-methyltransferase of Shewanella baltica (strain OS223).